Here is a 640-residue protein sequence, read N- to C-terminus: UvrABC system protein C (640 aa).

Residues 35 to 113 (DAPGVYRMIG…IKQLKPRFNV (79 aa)) enclose the GIY-YIG domain. In terms of domain architecture, UVR spans 223–258 (RAVMATMAKAMEEAAEELEFERAARLRDRIRALSAV).

The protein belongs to the UvrC family. Interacts with UvrB in an incision complex.

The protein resides in the cytoplasm. Functionally, the UvrABC repair system catalyzes the recognition and processing of DNA lesions. UvrC both incises the 5' and 3' sides of the lesion. The N-terminal half is responsible for the 3' incision and the C-terminal half is responsible for the 5' incision. This chain is UvrABC system protein C, found in Caulobacter vibrioides (strain ATCC 19089 / CIP 103742 / CB 15) (Caulobacter crescentus).